Here is a 161-residue protein sequence, read N- to C-terminus: Putative acetyltransferase SAV0762 (161 aa).

This sequence belongs to the transferase hexapeptide repeat family.

In Staphylococcus aureus (strain Mu50 / ATCC 700699), this protein is Putative acetyltransferase SAV0762.